A 139-amino-acid polypeptide reads, in one-letter code: Large ribosomal subunit protein uL16 (139 aa).

It belongs to the universal ribosomal protein uL16 family. Part of the 50S ribosomal subunit.

Functionally, binds 23S rRNA and is also seen to make contacts with the A and possibly P site tRNAs. The chain is Large ribosomal subunit protein uL16 from Mycoplasma pneumoniae (strain ATCC 29342 / M129 / Subtype 1) (Mycoplasmoides pneumoniae).